Here is a 944-residue protein sequence, read N- to C-terminus: 2-oxoglutarate dehydrogenase E1 component (944 aa).

The disordered stretch occupies residues R915–N944. Positions P925–V936 are enriched in basic and acidic residues.

It belongs to the alpha-ketoglutarate dehydrogenase family. Homodimer. Part of the 2-oxoglutarate dehydrogenase (OGDH) complex composed of E1 (2-oxoglutarate dehydrogenase), E2 (dihydrolipoamide succinyltransferase) and E3 (dihydrolipoamide dehydrogenase); the complex contains multiple copies of the three enzymatic components (E1, E2 and E3). Thiamine diphosphate is required as a cofactor.

The catalysed reaction is N(6)-[(R)-lipoyl]-L-lysyl-[protein] + 2-oxoglutarate + H(+) = N(6)-[(R)-S(8)-succinyldihydrolipoyl]-L-lysyl-[protein] + CO2. In terms of biological role, E1 component of the 2-oxoglutarate dehydrogenase (OGDH) complex which catalyzes the decarboxylation of 2-oxoglutarate, the first step in the conversion of 2-oxoglutarate to succinyl-CoA and CO(2). The sequence is that of 2-oxoglutarate dehydrogenase E1 component from Bacillus velezensis (strain DSM 23117 / BGSC 10A6 / LMG 26770 / FZB42) (Bacillus amyloliquefaciens subsp. plantarum).